Here is a 378-residue protein sequence, read N- to C-terminus: Queuine tRNA-ribosyltransferase (378 aa).

Aspartate 90 acts as the Proton acceptor in catalysis. Substrate contacts are provided by residues 90–94 (DSGGY), aspartate 152, glutamine 194, and glycine 223. The interval 254 to 260 (GVGKPED) is RNA binding. Aspartate 273 (nucleophile) is an active-site residue. The interval 278–282 (TRNAR) is RNA binding; important for wobble base 34 recognition. 4 residues coordinate Zn(2+): cysteine 311, cysteine 313, cysteine 316, and histidine 342.

It belongs to the queuine tRNA-ribosyltransferase family. As to quaternary structure, homodimer. Within each dimer, one monomer is responsible for RNA recognition and catalysis, while the other monomer binds to the replacement base PreQ1. The cofactor is Zn(2+).

It carries out the reaction 7-aminomethyl-7-carbaguanine + guanosine(34) in tRNA = 7-aminomethyl-7-carbaguanosine(34) in tRNA + guanine. Its pathway is tRNA modification; tRNA-queuosine biosynthesis. Catalyzes the base-exchange of a guanine (G) residue with the queuine precursor 7-aminomethyl-7-deazaguanine (PreQ1) at position 34 (anticodon wobble position) in tRNAs with GU(N) anticodons (tRNA-Asp, -Asn, -His and -Tyr). Catalysis occurs through a double-displacement mechanism. The nucleophile active site attacks the C1' of nucleotide 34 to detach the guanine base from the RNA, forming a covalent enzyme-RNA intermediate. The proton acceptor active site deprotonates the incoming PreQ1, allowing a nucleophilic attack on the C1' of the ribose to form the product. After dissociation, two additional enzymatic reactions on the tRNA convert PreQ1 to queuine (Q), resulting in the hypermodified nucleoside queuosine (7-(((4,5-cis-dihydroxy-2-cyclopenten-1-yl)amino)methyl)-7-deazaguanosine). The protein is Queuine tRNA-ribosyltransferase of Aquifex aeolicus (strain VF5).